Here is a 239-residue protein sequence, read N- to C-terminus: Prolactin-8A4 (239 aa).

The N-terminal stretch at 1–31 is a signal peptide; it reads MMKLALSQPPFSGTLLMLVVSILLLWEKAAS. Intrachain disulfides connect cysteine 35/cysteine 42 and cysteine 102/cysteine 215. Residues asparagine 211 and asparagine 218 are each glycosylated (N-linked (GlcNAc...) asparagine). A disulfide bond links cysteine 232 and cysteine 239.

This sequence belongs to the somatotropin/prolactin family. In terms of tissue distribution, placental basal zone cells.

The protein resides in the secreted. The sequence is that of Prolactin-8A4 (Prl8a4) from Rattus norvegicus (Rat).